The sequence spans 228 residues: Triosephosphate isomerase (228 aa).

11 to 13 (NFK) contacts substrate. Catalysis depends on His-95, which acts as the Electrophile. The active-site Proton acceptor is Glu-143. Residues Ile-148, Gly-183, and 204–205 (AS) contribute to the substrate site.

Belongs to the triosephosphate isomerase family. In terms of assembly, homotetramer; dimer of dimers.

It localises to the cytoplasm. It catalyses the reaction D-glyceraldehyde 3-phosphate = dihydroxyacetone phosphate. Its pathway is carbohydrate biosynthesis; gluconeogenesis. It participates in carbohydrate degradation; glycolysis; D-glyceraldehyde 3-phosphate from glycerone phosphate: step 1/1. Involved in the gluconeogenesis. Catalyzes stereospecifically the conversion of dihydroxyacetone phosphate (DHAP) to D-glyceraldehyde-3-phosphate (G3P). This Pyrococcus abyssi (strain GE5 / Orsay) protein is Triosephosphate isomerase.